Reading from the N-terminus, the 384-residue chain is GTPase Obg (384 aa).

The region spanning 1–159 (MKFIDEAKIE…RSLQLELKVL (159 aa)) is the Obg domain. The disordered stretch occupies residues 20 to 46 (ATSFRREKFVPRGGPDGGDGGKGGSVW). Gly residues predominate over residues 33–43 (GPDGGDGGKGG). In terms of domain architecture, OBG-type G spans 160 to 348 (ADVGLLGMPN…LVHQINQYLT (189 aa)). GTP is bound by residues 166-173 (GMPNAGKS), 191-195 (FTTLH), 213-216 (DIPG), 284-287 (NKLD), and 329-331 (SAL). Positions 173 and 193 each coordinate Mg(2+).

Belongs to the TRAFAC class OBG-HflX-like GTPase superfamily. OBG GTPase family. As to quaternary structure, monomer. The cofactor is Mg(2+).

It is found in the cytoplasm. Its function is as follows. An essential GTPase which binds GTP, GDP and possibly (p)ppGpp with moderate affinity, with high nucleotide exchange rates and a fairly low GTP hydrolysis rate. Plays a role in control of the cell cycle, stress response, ribosome biogenesis and in those bacteria that undergo differentiation, in morphogenesis control. The sequence is that of GTPase Obg from Neisseria meningitidis serogroup C / serotype 2a (strain ATCC 700532 / DSM 15464 / FAM18).